The following is a 149-amino-acid chain: GATA transcription factor 15 (149 aa).

The segment covering 1 to 10 has biased composition (basic and acidic residues); sequence MLDPTEKVID. Disordered stretches follow at residues 1 to 41 and 76 to 102; these read MLDP…NEKK and RRTL…GDSL. The segment at 37–91 adopts a GATA-type zinc-finger fold; that stretch reads SNEKKSCAICGTSKTPLWRGGPAGPKSLCNACGIRNRKKRRTLISNRSEDKKKKS.

This sequence belongs to the type IV zinc-finger family. Class B subfamily.

The protein resides in the nucleus. In terms of biological role, transcriptional regulator that specifically binds 5'-GATA-3' or 5'-GAT-3' motifs within gene promoters. This chain is GATA transcription factor 15 (GATA15), found in Arabidopsis thaliana (Mouse-ear cress).